We begin with the raw amino-acid sequence, 247 residues long: Mannose-P-dolichol utilization defect 1 protein (247 aa).

The residue at position 2 (Ala-2) is an N-acetylalanine. The next 7 membrane-spanning stretches (helical) occupy residues Cys-37–Val-57, Leu-74–Ile-94, Phe-100–Val-120, Val-128–Leu-145, Leu-151–Leu-171, Leu-185–Ile-205, and Met-213–Phe-233. In terms of domain architecture, PQ-loop 1 spans Lys-39–Glu-105. The PQ-loop 2 domain occupies Ala-159 to Thr-216.

Belongs to the MPDU1 (TC 2.A.43.3) family.

It localises to the membrane. Required for normal utilization of mannose-dolichol phosphate (Dol-P-Man) in the synthesis of N-linked and O-linked oligosaccharides and GPI anchors. This chain is Mannose-P-dolichol utilization defect 1 protein (MPDU1), found in Homo sapiens (Human).